Consider the following 136-residue polypeptide: Large ribosomal subunit protein uL16c (136 aa).

This sequence belongs to the universal ribosomal protein uL16 family. As to quaternary structure, part of the 50S ribosomal subunit.

The protein resides in the plastid. It localises to the chloroplast. The protein is Large ribosomal subunit protein uL16c of Oryza sativa (Rice).